Reading from the N-terminus, the 850-residue chain is Protein argonaute 8 (850 aa).

Positions 1–30 (MDTTLPPPQHMEREPLKSKSSLLPMTRRGN) are disordered. Residues 247 to 361 (PVVDFLIANQ…FPIELCELVS (115 aa)) form the PAZ domain. One can recognise a Piwi domain in the interval 518–811 (QSILGEVPPK…AAAQMATAMK (294 aa)).

Belongs to the argonaute family. Ago subfamily.

Its function is as follows. Involved in RNA-mediated post-transcriptional gene silencing (PTGS). Main component of the RNA-induced silencing complex (RISC) that binds to a short guide RNA such as a microRNA (miRNA) or small interfering RNA (siRNA). RISC uses the mature miRNA or siRNA as a guide for slicer-directed cleavage of homologous mRNAs to repress gene expression. This chain is Protein argonaute 8 (AGO8), found in Arabidopsis thaliana (Mouse-ear cress).